The sequence spans 248 residues: Cobalt transport protein CbiM (248 aa).

Residues M1–A29 form the signal peptide. Transmembrane regions (helical) follow at residues G40 to I60, T72 to V92, L104 to F124, T136 to F156, G167 to V187, and I210 to Y230.

This sequence belongs to the CbiM family. As to quaternary structure, forms an energy-coupling factor (ECF) transporter complex composed of an ATP-binding protein (A component, CbiO), a transmembrane protein (T component, CbiQ) and 2 possible substrate-capture proteins (S components, CbiM and CbiN) of unknown stoichimetry.

Its subcellular location is the cell membrane. Its pathway is cofactor biosynthesis; adenosylcobalamin biosynthesis. Part of the energy-coupling factor (ECF) transporter complex CbiMNOQ involved in cobalt import. The polypeptide is Cobalt transport protein CbiM (Ruminiclostridium cellulolyticum (strain ATCC 35319 / DSM 5812 / JCM 6584 / H10) (Clostridium cellulolyticum)).